A 429-amino-acid polypeptide reads, in one-letter code: UDP-N-acetylglucosamine 1-carboxyvinyltransferase (429 aa).

22-23 (KN) serves as a coordination point for phosphoenolpyruvate. Arg102 provides a ligand contact to UDP-N-acetyl-alpha-D-glucosamine. The active-site Proton donor is the Cys126. Cys126 carries the 2-(S-cysteinyl)pyruvic acid O-phosphothioketal modification. Residues 131–135 (RPVDL), Asp316, and Ile338 each bind UDP-N-acetyl-alpha-D-glucosamine.

The protein belongs to the EPSP synthase family. MurA subfamily.

The protein localises to the cytoplasm. It carries out the reaction phosphoenolpyruvate + UDP-N-acetyl-alpha-D-glucosamine = UDP-N-acetyl-3-O-(1-carboxyvinyl)-alpha-D-glucosamine + phosphate. Its pathway is cell wall biogenesis; peptidoglycan biosynthesis. Cell wall formation. Adds enolpyruvyl to UDP-N-acetylglucosamine. The sequence is that of UDP-N-acetylglucosamine 1-carboxyvinyltransferase from Nitrobacter hamburgensis (strain DSM 10229 / NCIMB 13809 / X14).